The chain runs to 87 residues: NAD(P)H-quinone oxidoreductase subunit O (87 aa).

A compositionally biased stretch (basic and acidic residues) spans 1–10; sequence MSEQTGKVDD. The segment at 1 to 26 is disordered; sequence MSEQTGKVDDSQSPPKVQKKLRKGDL.

Belongs to the complex I NdhO subunit family. As to quaternary structure, NDH-1 can be composed of about 15 different subunits; different subcomplexes with different compositions have been identified which probably have different functions.

Its subcellular location is the cellular thylakoid membrane. It catalyses the reaction a plastoquinone + NADH + (n+1) H(+)(in) = a plastoquinol + NAD(+) + n H(+)(out). The enzyme catalyses a plastoquinone + NADPH + (n+1) H(+)(in) = a plastoquinol + NADP(+) + n H(+)(out). NDH-1 shuttles electrons from an unknown electron donor, via FMN and iron-sulfur (Fe-S) centers, to quinones in the respiratory and/or the photosynthetic chain. The immediate electron acceptor for the enzyme in this species is believed to be plastoquinone. Couples the redox reaction to proton translocation, and thus conserves the redox energy in a proton gradient. Cyanobacterial NDH-1 also plays a role in inorganic carbon-concentration. This is NAD(P)H-quinone oxidoreductase subunit O from Prochlorococcus marinus (strain NATL1A).